The primary structure comprises 652 residues: DNA ligase (652 aa).

NAD(+)-binding positions include 29–33, 78–79, and glutamate 107; these read DSQYD and SL. The N6-AMP-lysine intermediate role is filled by lysine 109. Residues arginine 130, glutamate 164, lysine 278, and lysine 302 each coordinate NAD(+). Cysteine 395, cysteine 398, cysteine 413, and cysteine 418 together coordinate Zn(2+). The 76-residue stretch at 577-652 folds into the BRCT domain; sequence STDAQLSGLT…IQDEDWLLNL (76 aa).

The protein belongs to the NAD-dependent DNA ligase family. LigA subfamily. Requires Mg(2+) as cofactor. Mn(2+) serves as cofactor.

It carries out the reaction NAD(+) + (deoxyribonucleotide)n-3'-hydroxyl + 5'-phospho-(deoxyribonucleotide)m = (deoxyribonucleotide)n+m + AMP + beta-nicotinamide D-nucleotide.. DNA ligase that catalyzes the formation of phosphodiester linkages between 5'-phosphoryl and 3'-hydroxyl groups in double-stranded DNA using NAD as a coenzyme and as the energy source for the reaction. It is essential for DNA replication and repair of damaged DNA. The polypeptide is DNA ligase (Streptococcus agalactiae serotype III (strain NEM316)).